The primary structure comprises 728 residues: Phosphoribosylformylglycinamidine synthase subunit PurL (728 aa).

H40 is an active-site residue. Residues Y43 and K82 each coordinate ATP. Mg(2+) is bound at residue E84. Residues 85–88 (SHNH) and R107 contribute to the substrate site. H86 (proton acceptor) is an active-site residue. D108 lines the Mg(2+) pocket. Q231 is a substrate binding site. D259 contributes to the Mg(2+) binding site. Position 303–305 (303–305 (ESQ)) interacts with substrate. ATP-binding residues include N483 and G520. N521 contributes to the Mg(2+) binding site. A substrate-binding site is contributed by S523.

This sequence belongs to the FGAMS family. In terms of assembly, monomer. Part of the FGAM synthase complex composed of 1 PurL, 1 PurQ and 2 PurS subunits.

It is found in the cytoplasm. The enzyme catalyses N(2)-formyl-N(1)-(5-phospho-beta-D-ribosyl)glycinamide + L-glutamine + ATP + H2O = 2-formamido-N(1)-(5-O-phospho-beta-D-ribosyl)acetamidine + L-glutamate + ADP + phosphate + H(+). Its pathway is purine metabolism; IMP biosynthesis via de novo pathway; 5-amino-1-(5-phospho-D-ribosyl)imidazole from N(2)-formyl-N(1)-(5-phospho-D-ribosyl)glycinamide: step 1/2. Part of the phosphoribosylformylglycinamidine synthase complex involved in the purines biosynthetic pathway. Catalyzes the ATP-dependent conversion of formylglycinamide ribonucleotide (FGAR) and glutamine to yield formylglycinamidine ribonucleotide (FGAM) and glutamate. The FGAM synthase complex is composed of three subunits. PurQ produces an ammonia molecule by converting glutamine to glutamate. PurL transfers the ammonia molecule to FGAR to form FGAM in an ATP-dependent manner. PurS interacts with PurQ and PurL and is thought to assist in the transfer of the ammonia molecule from PurQ to PurL. The protein is Phosphoribosylformylglycinamidine synthase subunit PurL of Carboxydothermus hydrogenoformans (strain ATCC BAA-161 / DSM 6008 / Z-2901).